The chain runs to 159 residues: Protein Smg homolog (159 aa).

Belongs to the Smg family.

The chain is Protein Smg homolog from Vibrio parahaemolyticus serotype O3:K6 (strain RIMD 2210633).